We begin with the raw amino-acid sequence, 151 residues long: Lipoprotein signal peptidase (151 aa).

Helical transmembrane passes span 33–53, 58–78, and 87–107; these read VIPD…FGLL, WIFI…QFKI, and LTLG…LFIG. Active-site residues include Asp-111 and Asp-126. Residues 120 to 140 traverse the membrane as a helical segment; the sequence is FVFNFADSAIVVGVGLLMILM.

It belongs to the peptidase A8 family.

It localises to the cell membrane. The catalysed reaction is Release of signal peptides from bacterial membrane prolipoproteins. Hydrolyzes -Xaa-Yaa-Zaa-|-(S,diacylglyceryl)Cys-, in which Xaa is hydrophobic (preferably Leu), and Yaa (Ala or Ser) and Zaa (Gly or Ala) have small, neutral side chains.. Its pathway is protein modification; lipoprotein biosynthesis (signal peptide cleavage). In terms of biological role, this protein specifically catalyzes the removal of signal peptides from prolipoproteins. In Desulfitobacterium hafniense (strain DSM 10664 / DCB-2), this protein is Lipoprotein signal peptidase.